The sequence spans 311 residues: Urease accessory protein UreD 2 (311 aa).

Belongs to the UreD family. As to quaternary structure, ureD, UreF and UreG form a complex that acts as a GTP-hydrolysis-dependent molecular chaperone, activating the urease apoprotein by helping to assemble the nickel containing metallocenter of UreC. The UreE protein probably delivers the nickel.

It is found in the cytoplasm. In terms of biological role, required for maturation of urease via the functional incorporation of the urease nickel metallocenter. The protein is Urease accessory protein UreD 2 of Methylorubrum extorquens (strain PA1) (Methylobacterium extorquens).